Here is a 317-residue protein sequence, read N- to C-terminus: 4-hydroxy-3-methylbut-2-enyl diphosphate reductase (317 aa).

Cys-12 contributes to the [4Fe-4S] cluster binding site. Residues His-41 and His-74 each coordinate (2E)-4-hydroxy-3-methylbut-2-enyl diphosphate. Positions 41 and 74 each coordinate dimethylallyl diphosphate. Isopentenyl diphosphate-binding residues include His-41 and His-74. Cys-97 serves as a coordination point for [4Fe-4S] cluster. His-125 is a (2E)-4-hydroxy-3-methylbut-2-enyl diphosphate binding site. Residue His-125 coordinates dimethylallyl diphosphate. An isopentenyl diphosphate-binding site is contributed by His-125. The active-site Proton donor is Glu-127. Thr-168 provides a ligand contact to (2E)-4-hydroxy-3-methylbut-2-enyl diphosphate. Residue Cys-198 coordinates [4Fe-4S] cluster. Ser-226, Ser-227, Asn-228, and Ser-270 together coordinate (2E)-4-hydroxy-3-methylbut-2-enyl diphosphate. The dimethylallyl diphosphate site is built by Ser-226, Ser-227, Asn-228, and Ser-270. The isopentenyl diphosphate site is built by Ser-226, Ser-227, Asn-228, and Ser-270.

It belongs to the IspH family. As to quaternary structure, homodimer. Requires [4Fe-4S] cluster as cofactor.

It carries out the reaction isopentenyl diphosphate + 2 oxidized [2Fe-2S]-[ferredoxin] + H2O = (2E)-4-hydroxy-3-methylbut-2-enyl diphosphate + 2 reduced [2Fe-2S]-[ferredoxin] + 2 H(+). It catalyses the reaction dimethylallyl diphosphate + 2 oxidized [2Fe-2S]-[ferredoxin] + H2O = (2E)-4-hydroxy-3-methylbut-2-enyl diphosphate + 2 reduced [2Fe-2S]-[ferredoxin] + 2 H(+). It functions in the pathway isoprenoid biosynthesis; dimethylallyl diphosphate biosynthesis; dimethylallyl diphosphate from (2E)-4-hydroxy-3-methylbutenyl diphosphate: step 1/1. The protein operates within isoprenoid biosynthesis; isopentenyl diphosphate biosynthesis via DXP pathway; isopentenyl diphosphate from 1-deoxy-D-xylulose 5-phosphate: step 6/6. Functionally, catalyzes the conversion of 1-hydroxy-2-methyl-2-(E)-butenyl 4-diphosphate (HMBPP) into a mixture of isopentenyl diphosphate (IPP) and dimethylallyl diphosphate (DMAPP). Acts in the terminal step of the DOXP/MEP pathway for isoprenoid precursor biosynthesis. The chain is 4-hydroxy-3-methylbut-2-enyl diphosphate reductase from Edwardsiella ictaluri (strain 93-146).